Here is a 64-residue protein sequence, read N- to C-terminus: Putative neurotoxin-H (64 aa).

The N-terminal stretch at 1 to 19 (MYATVTVTVLLLISSGIFC) is a signal peptide. Disulfide bonds link Cys25-Cys45, Cys32-Cys54, and Cys36-Cys56.

Expressed by the venom gland.

It localises to the secreted. This chain is Putative neurotoxin-H, found in Lychas mucronatus (Chinese swimming scorpion).